The primary structure comprises 207 residues: Ras-related protein Rab-7a (207 aa).

The residue at position 2 (Thr2) is an N-acetylthreonine. Ser17, Gly18, Val19, Gly20, Lys21, Thr22, Ser23, Ser34, Asn35, Tyr37, and Thr40 together coordinate GTP. Thr22 contributes to the Mg(2+) binding site. The short motif at 28–41 (YVNKKFSNQYKATI) is the Switch 1 element. The Mg(2+) site is built by Thr40 and Asp63. Gly66 provides a ligand contact to GTP. A Switch 2 motif is present at residues 67 to 82 (QERFQSLGVAFYRGAD). At Ser72 the chain carries Phosphoserine. 5 residues coordinate GTP: Asn125, Lys126, Asp128, Ala156, and Lys157. Residues Lys191 and Lys194 each participate in a glycyl lysine isopeptide (Lys-Gly) (interchain with G-Cter in ubiquitin) cross-link. 2 S-geranylgeranyl cysteine lipidation sites follow: Cys205 and Cys207. Cys207 is modified (cysteine methyl ester).

Belongs to the small GTPase superfamily. Rab family. As to quaternary structure, interacts with NTRK1/TRKA. Interacts with RILP. Interacts with PSMA7. Interacts with RNF115. Interacts with FYCO1. Interacts with the PIK3C3/VPS34-PIK3R4 complex. The GTP-bound form interacts with OSBPL1A. The GTP-bound form interacts with RAC1. Interacts with CLN3. Interacts with CHM, the substrate-binding subunit of the Rab geranylgeranyltransferase complex. Interacts with C9orf72. Does not interact with HPS4 and the BLOC-3 complex (heterodimer of HPS1 and HPS4). Interacts with CLN5. Interacts with PLEKHM1 (via N- and C-terminus). Interacts with PRPH; the interaction is direct. Interacts with VPS13A. The GDP-bound form interacts with RIMOC1. Interacts with the MON1A-CCZ1B complex and this interaction is enhanced in the presence of RIMOC1. Interacts with VPS39 and VPS41. Forms a ternary complex with LAMP2 and RUFY4; the interaction with LAMP2 is mediated by RUFY4 (via RUN and coiled coil domains). Requires Mg(2+) as cofactor. Deubiquitination at Lys-191 and Lys-194 by USP32. In terms of processing, phosphorylated at Ser-72 by LRRK1; phosphorylation is dependent on protein kinase C (PKC) activation of LRRK1. Post-translationally, prenylated. Prenylation is required for association with cellular membranes.

Its subcellular location is the cytoplasmic vesicle. The protein localises to the phagosome membrane. The protein resides in the late endosome membrane. It localises to the lysosome membrane. It is found in the melanosome membrane. Its subcellular location is the autophagosome membrane. The protein localises to the lipid droplet. The protein resides in the endosome membrane. It localises to the mitochondrion membrane. The enzyme catalyses GTP + H2O = GDP + phosphate + H(+). Regulated by guanine nucleotide exchange factors (GEFs) which promote the exchange of bound GDP for free GTP. Regulated by GTPase activating proteins (GAPs) which increase the GTP hydrolysis activity. Inhibited by GDP dissociation inhibitors (GDIs). The small GTPases Rab are key regulators of intracellular membrane trafficking, from the formation of transport vesicles to their fusion with membranes. Rabs cycle between an inactive GDP-bound form and an active GTP-bound form that is able to recruit to membranes different sets of downstream effectors directly responsible for vesicle formation, movement, tethering and fusion. In its active state, RAB7A binds to a variety of effector proteins playing a key role in the regulation of endo-lysosomal trafficking. Governs early-to-late endosomal maturation, microtubule minus-end as well as plus-end directed endosomal migration and positioning, and endosome-lysosome transport through different protein-protein interaction cascades. Also plays a central role in growth-factor-mediated cell signaling, nutrient-transporter-mediated nutrient uptake, neurotrophin transport in the axons of neurons and lipid metabolism. Also involved in regulation of some specialized endosomal membrane trafficking, such as maturation of melanosomes, pathogen-induced phagosomes (or vacuoles) and autophagosomes. Plays a role in the maturation and acidification of phagosomes that engulf pathogens, such as S.aureus and Mycobacteria. Plays a role in the fusion of phagosomes with lysosomes. In concert with RAC1, plays a role in regulating the formation of RBs (ruffled borders) in osteoclasts. Controls the endosomal trafficking and neurite outgrowth signaling of NTRK1/TRKA. Regulates the endocytic trafficking of the EGF-EGFR complex by regulating its lysosomal degradation. Involved in the ADRB2-stimulated lipolysis through lipophagy, a cytosolic lipase-independent autophagic pathway. Required for the exosomal release of SDCBP, CD63 and syndecan. Required for vesicular trafficking and cell surface expression of ACE2. May play a role in PRPH neuronal intermediate filament assembly. In Bos taurus (Bovine), this protein is Ras-related protein Rab-7a (RAB7A).